The sequence spans 406 residues: Exodeoxyribonuclease 7 large subunit (406 aa).

Belongs to the XseA family. In terms of assembly, heterooligomer composed of large and small subunits.

The protein resides in the cytoplasm. It catalyses the reaction Exonucleolytic cleavage in either 5'- to 3'- or 3'- to 5'-direction to yield nucleoside 5'-phosphates.. Bidirectionally degrades single-stranded DNA into large acid-insoluble oligonucleotides, which are then degraded further into small acid-soluble oligonucleotides. The chain is Exodeoxyribonuclease 7 large subunit from Desulforudis audaxviator (strain MP104C).